We begin with the raw amino-acid sequence, 1068 residues long: Probable ATPase FE772_23070 (1068 aa).

217–224 (GGGGAGKT) is an ATP binding site.

In terms of biological role, involved in defense against bacteriophages. When this probable 4 gene operon (bGSDM-FE772_23060-FE772_23065-FE772_23070) is inserted into E.coli it provides nearly 100-fold protection against phages T5 and T6 and about 8-fold against phage T4. The operon without bGSDM no longer protects against phage. Probably a nucleotide hydrolase, possibly of ATP. This Lysobacter enzymogenes protein is Probable ATPase FE772_23070.